Here is a 101-residue protein sequence, read N- to C-terminus: Secreted enzymes activator (101 aa).

The segment covering Met1–Ala10 has biased composition (basic residues). Disordered regions lie at residues Met1–Ser26 and Thr45–Gly101. Positions Thr45–Ser60 are enriched in low complexity. Positions Arg55–Gln74 form a DNA-binding region, H-T-H motif.

Its function is as follows. Increases the production of several extracellular enzymes, like alkaline phosphatase, amylase, protease or lipase. When present in high concentrations, delays the production of pigments and sporulation. The polypeptide is Secreted enzymes activator (saf) (Streptomyces griseus).